A 353-amino-acid polypeptide reads, in one-letter code: Protein RecA (353 aa).

68–75 (GPESSGKT) contributes to the ATP binding site.

It belongs to the RecA family.

The protein localises to the cytoplasm. Can catalyze the hydrolysis of ATP in the presence of single-stranded DNA, the ATP-dependent uptake of single-stranded DNA by duplex DNA, and the ATP-dependent hybridization of homologous single-stranded DNAs. It interacts with LexA causing its activation and leading to its autocatalytic cleavage. This chain is Protein RecA, found in Roseiflexus castenholzii (strain DSM 13941 / HLO8).